Here is a 413-residue protein sequence, read N- to C-terminus: NADH-quinone oxidoreductase subunit D (413 aa).

It belongs to the complex I 49 kDa subunit family. As to quaternary structure, NDH-1 is composed of 14 different subunits. Subunits NuoB, C, D, E, F, and G constitute the peripheral sector of the complex.

The protein localises to the cell inner membrane. The enzyme catalyses a quinone + NADH + 5 H(+)(in) = a quinol + NAD(+) + 4 H(+)(out). Functionally, NDH-1 shuttles electrons from NADH, via FMN and iron-sulfur (Fe-S) centers, to quinones in the respiratory chain. The immediate electron acceptor for the enzyme in this species is believed to be ubiquinone. Couples the redox reaction to proton translocation (for every two electrons transferred, four hydrogen ions are translocated across the cytoplasmic membrane), and thus conserves the redox energy in a proton gradient. In Rhodobacter capsulatus (Rhodopseudomonas capsulata), this protein is NADH-quinone oxidoreductase subunit D.